Reading from the N-terminus, the 193-residue chain is 3-isopropylmalate dehydratase small subunit (193 aa).

It belongs to the LeuD family. LeuD type 1 subfamily. As to quaternary structure, heterodimer of LeuC and LeuD.

The catalysed reaction is (2R,3S)-3-isopropylmalate = (2S)-2-isopropylmalate. The protein operates within amino-acid biosynthesis; L-leucine biosynthesis; L-leucine from 3-methyl-2-oxobutanoate: step 2/4. Catalyzes the isomerization between 2-isopropylmalate and 3-isopropylmalate, via the formation of 2-isopropylmaleate. In Listeria innocua serovar 6a (strain ATCC BAA-680 / CLIP 11262), this protein is 3-isopropylmalate dehydratase small subunit.